The chain runs to 425 residues: Nucleoporin nup45 (425 aa).

Positions 1–10 are enriched in polar residues; it reads MFGLNKTPSF. The disordered stretch occupies residues 1–207; that stretch reads MFGLNKTPSF…GFGLSNNTQT (207 aa). Positions 11–27 are enriched in low complexity; it reads GSTGTQNQNTGTSAGTG. Over residues 28–45 the composition is skewed to polar residues; that stretch reads LFSSNTFGNNTQANTPAS. Over residues 47-56 the composition is skewed to gly residues; the sequence is GFGGVTGGAF. Positions 72–89 are enriched in polar residues; sequence PNATSTTPGLNLFGQNPQ. Low complexity-rich tracts occupy residues 112-126 and 135-150; these read NQNQ…AAPT and QNQT…ANTS. Over residues 167–207 the composition is skewed to polar residues; that stretch reads NRPNTSTFGQFSTQPASAGLFGQSTQPSGSTGFGLSNNTQT. Phosphoserine is present on residues Ser289 and Ser290.

The protein localises to the cytoplasm. It is found in the nucleus. The protein resides in the nuclear pore complex. Functions as a component of the nuclear pore complex (NPC). NPC components, collectively referred to as nucleoporins (NUPs), can play the role of both NPC structural components and of docking or interaction partners for transiently associated nuclear transport factors. Active directional transport is assured by both, a Phe-Gly (FG) repeat affinity gradient for these transport factors across the NPC and a transport cofactor concentration gradient across the nuclear envelope. In Schizosaccharomyces pombe (strain 972 / ATCC 24843) (Fission yeast), this protein is Nucleoporin nup45 (nup45).